Here is a 102-residue protein sequence, read N- to C-terminus: Serum amyloid A-5 protein (102 aa).

The disordered stretch occupies residues 68–102; it reads GRGHEDSMADQEANRWGRSGNDPNHYRPAGLPDKY. Residues 69–82 are compositionally biased toward basic and acidic residues; the sequence is RGHEDSMADQEANR.

The protein belongs to the SAA family. As to expression, expressed by the liver; secreted in plasma.

It is found in the secreted. In terms of biological role, major acute phase reactant. Apolipoprotein of the HDL complex. This Mesocricetus auratus (Golden hamster) protein is Serum amyloid A-5 protein.